The following is a 377-amino-acid chain: tRNA-specific 2-thiouridylase MnmA (377 aa).

Residues 12–19 and Met-38 each bind ATP; that span reads GMSGGVDS. The segment at 98 to 100 is interaction with target base in tRNA; sequence NPD. The Nucleophile role is filled by Cys-103. Cys-103 and Cys-200 are joined by a disulfide. Gly-127 contacts ATP. The interval 150 to 152 is interaction with tRNA; sequence KDQ. The active-site Cysteine persulfide intermediate is Cys-200. Residues 314-315 form an interaction with tRNA region; sequence RY.

This sequence belongs to the MnmA/TRMU family.

The protein resides in the cytoplasm. It catalyses the reaction S-sulfanyl-L-cysteinyl-[protein] + uridine(34) in tRNA + AH2 + ATP = 2-thiouridine(34) in tRNA + L-cysteinyl-[protein] + A + AMP + diphosphate + H(+). Catalyzes the 2-thiolation of uridine at the wobble position (U34) of tRNA, leading to the formation of s(2)U34. The sequence is that of tRNA-specific 2-thiouridylase MnmA from Limosilactobacillus fermentum (strain NBRC 3956 / LMG 18251) (Lactobacillus fermentum).